The sequence spans 329 residues: Sulfate/thiosulfate import ATP-binding protein CysA (329 aa).

The 235-residue stretch at 3–237 folds into the ABC transporter domain; the sequence is IEIRNVSKNF…PASDFVYHFL (235 aa). Residue 35-42 participates in ATP binding; that stretch reads GPSGCGKT.

This sequence belongs to the ABC transporter superfamily. Sulfate/tungstate importer (TC 3.A.1.6) family. As to quaternary structure, the complex is composed of two ATP-binding proteins (CysA), two transmembrane proteins (CysT and CysW) and a solute-binding protein (CysP).

It localises to the cell inner membrane. It catalyses the reaction sulfate(out) + ATP + H2O = sulfate(in) + ADP + phosphate + H(+). The catalysed reaction is thiosulfate(out) + ATP + H2O = thiosulfate(in) + ADP + phosphate + H(+). Functionally, part of the ABC transporter complex CysAWTP involved in sulfate/thiosulfate import. Responsible for energy coupling to the transport system. This Pseudomonas aeruginosa (strain ATCC 15692 / DSM 22644 / CIP 104116 / JCM 14847 / LMG 12228 / 1C / PRS 101 / PAO1) protein is Sulfate/thiosulfate import ATP-binding protein CysA.